Consider the following 56-residue polypeptide: UPF0391 membrane protein PSHAa0537 (56 aa).

A run of 2 helical transmembrane segments spans residues 6–26 and 27–47; these read ITFL…IAGA and AAGI…ISLV.

It belongs to the UPF0391 family.

The protein resides in the cell membrane. The protein is UPF0391 membrane protein PSHAa0537 of Pseudoalteromonas translucida (strain TAC 125).